We begin with the raw amino-acid sequence, 315 residues long: MSQPTPAVRTFQDLILALQNYWAAQGCVVLQPYDMEVGAGTFHTATFLRAVGPETWNAAYVQPSRRPADGRYGENPNRLQHYYQFQVVLKPNPANFQELYLGSLKAIGLDPLVHDIRFVEDNWESPTLGAWGLGWEIWLNGMEVTQFTYFQQVGGIECYPVTGEITYGLERLAMYIQGVDSVYDLVWADGPFGKVTYGDVFHQNEVEQSTYNFEHANVEKLFELFDFYESEANRLIKLDLPLPTYEMVLKASHTFNLLDARRAISVTERQRYILRVRTLARDVAQSYLQARARLGFPMATPELRDEVLAKLEAAQ.

It belongs to the class-II aminoacyl-tRNA synthetase family. In terms of assembly, tetramer of two alpha and two beta subunits.

The protein resides in the cytoplasm. It catalyses the reaction tRNA(Gly) + glycine + ATP = glycyl-tRNA(Gly) + AMP + diphosphate. The polypeptide is Glycine--tRNA ligase alpha subunit (Pseudomonas putida (strain W619)).